The sequence spans 209 residues: Cytidylate kinase (209 aa).

Residue 9–17 participates in ATP binding; the sequence is GPAAAGKGT.

The protein belongs to the cytidylate kinase family. Type 1 subfamily.

The protein resides in the cytoplasm. The catalysed reaction is CMP + ATP = CDP + ADP. The enzyme catalyses dCMP + ATP = dCDP + ADP. In Granulibacter bethesdensis (strain ATCC BAA-1260 / CGDNIH1), this protein is Cytidylate kinase.